We begin with the raw amino-acid sequence, 259 residues long: Protein LEAD-SENSITIVE 1 (259 aa).

In terms of domain architecture, LRAT spans 20-168; it reads YSWRTAYIYA…CKTALLVLEG (149 aa). Active-site residues include His30 and His42. The Acyl-thioester intermediate role is filled by Cys152.

Highly expressed in inflorescences, siliques and stems, and, to a lower extent, in roots and leaves.

Its subcellular location is the cytoplasm. Functionally, confers tolerance to lead ions (Pb) stress mediated by Pb(NO(3))(2) probably by promoting Pb accumulation leading to subsequent glutathione-dependent phytochelatin (PC) synthesis and related gene expression, including PDR12/ABCG40, GSH1, GSH2, GR1, GR2, PCS1 and PCS2. The sequence is that of Protein LEAD-SENSITIVE 1 from Arabidopsis thaliana (Mouse-ear cress).